The sequence spans 471 residues: G2/mitotic-specific cyclin-1 (471 aa).

This sequence belongs to the cyclin family. Cyclin AB subfamily.

In terms of biological role, essential for the control of the cell cycle at the G2/M (mitosis) transition. Interacts with the CDC2 protein kinase to form MPF. G2/M cyclins accumulate steadily during G2 and are abruptly destroyed at mitosis. In Saccharomyces cerevisiae (strain ATCC 204508 / S288c) (Baker's yeast), this protein is G2/mitotic-specific cyclin-1 (CLB1).